A 341-amino-acid polypeptide reads, in one-letter code: Uroporphyrinogen decarboxylase (341 aa).

Residues Arg-26 to Arg-30, Asp-75, Tyr-150, Ser-205, and His-318 contribute to the substrate site.

It belongs to the uroporphyrinogen decarboxylase family. As to quaternary structure, homodimer.

It localises to the cytoplasm. The enzyme catalyses uroporphyrinogen III + 4 H(+) = coproporphyrinogen III + 4 CO2. It functions in the pathway porphyrin-containing compound metabolism; protoporphyrin-IX biosynthesis; coproporphyrinogen-III from 5-aminolevulinate: step 4/4. In terms of biological role, catalyzes the decarboxylation of four acetate groups of uroporphyrinogen-III to yield coproporphyrinogen-III. The chain is Uroporphyrinogen decarboxylase from Thermus thermophilus (strain ATCC BAA-163 / DSM 7039 / HB27).